The sequence spans 157 residues: Capsid protein (157 aa).

Belongs to the virgaviridae capsid protein family.

It localises to the virion. In terms of biological role, capsid protein self-assembles to form rod-shaped virions about 18 nm in diameter with a central canal enclosing the viral genomic RNA. This chain is Capsid protein (CP), found in Brassica napus (Rape).